Consider the following 246-residue polypeptide: 3-oxoacyl-[acyl-carrier-protein] reductase FabG (246 aa).

Residues glycine 11 to arginine 14, asparagine 62 to valine 63, and asparagine 89 each bind NADP(+). Serine 141 contributes to the substrate binding site. Tyrosine 154 (proton acceptor) is an active-site residue. Residues tyrosine 154–lysine 158 and isoleucine 187 contribute to the NADP(+) site.

This sequence belongs to the short-chain dehydrogenases/reductases (SDR) family. As to quaternary structure, homotetramer.

It catalyses the reaction a (3R)-hydroxyacyl-[ACP] + NADP(+) = a 3-oxoacyl-[ACP] + NADPH + H(+). It functions in the pathway lipid metabolism; fatty acid biosynthesis. Functionally, catalyzes the NADPH-dependent reduction of beta-ketoacyl-ACP substrates to beta-hydroxyacyl-ACP products, the first reductive step in the elongation cycle of fatty acid biosynthesis. The protein is 3-oxoacyl-[acyl-carrier-protein] reductase FabG (fabG) of Staphylococcus aureus (strain Mu50 / ATCC 700699).